The sequence spans 580 residues: CTP synthase (580 aa).

A Glutamine amidotransferase type-1 domain is found at 304–559 (NIILVGKYVS…VAASSGCLDE (256 aa)). Active-site for GATase activity residues include C403, H532, and E534.

Belongs to the CTP synthase family.

The catalysed reaction is UTP + L-glutamine + ATP + H2O = CTP + L-glutamate + ADP + phosphate + 2 H(+). It participates in pyrimidine metabolism; CTP biosynthesis via de novo pathway; CTP from UDP: step 2/2. Functionally, catalyzes the ATP-dependent amination of UTP to CTP with either L-glutamine or ammonia as the source of nitrogen. This chain is CTP synthase (URA7), found in Gibberella zeae (strain ATCC MYA-4620 / CBS 123657 / FGSC 9075 / NRRL 31084 / PH-1) (Wheat head blight fungus).